The primary structure comprises 215 residues: Cytochrome b6 (215 aa).

The chain crosses the membrane as a helical span at residues 32–52 (IFYCLGGVTLICFLVQFATGF). A heme c-binding site is contributed by Cys-35. Heme b is bound by residues His-86 and His-100. 3 helical membrane-spanning segments follow: residues 90–110 (ASMM…TGGF), 116–136 (LTWV…VTGY), and 186–206 (AHTF…FLMI). His-187 and His-202 together coordinate heme b.

Belongs to the cytochrome b family. PetB subfamily. In terms of assembly, the 4 large subunits of the cytochrome b6-f complex are cytochrome b6, subunit IV (17 kDa polypeptide, PetD), cytochrome f and the Rieske protein, while the 4 small subunits are PetG, PetL, PetM and PetN. The complex functions as a dimer. It depends on heme b as a cofactor. Heme c is required as a cofactor.

The protein localises to the cell inner membrane. Functionally, component of the cytochrome b6-f complex, which mediates electron transfer between photosystem II (PSII) and photosystem I (PSI), cyclic electron flow around PSI, and state transitions. The sequence is that of Cytochrome b6 from Gloeobacter violaceus (strain ATCC 29082 / PCC 7421).